Consider the following 148-residue polypeptide: Ribonuclease H (148 aa).

Residues 3 to 144 (DKEQVVIYTD…ADQLANRGVA (142 aa)) form the RNase H type-1 domain. Positions 12, 50, 72, and 136 each coordinate Mg(2+). A disordered region spans residues 125-148 (GHTGDPGNERADQLANRGVAELPR).

This sequence belongs to the RNase H family. As to quaternary structure, monomer. Mg(2+) serves as cofactor.

It is found in the cytoplasm. It carries out the reaction Endonucleolytic cleavage to 5'-phosphomonoester.. Functionally, endonuclease that specifically degrades the RNA of RNA-DNA hybrids. This Pseudomonas aeruginosa (strain LESB58) protein is Ribonuclease H.